A 450-amino-acid chain; its full sequence is F-box/FBD/LRR-repeat protein At5g22660 (450 aa).

The 47-residue stretch at 12-58 (EDRISSLPDHLLSQILSNLPTENAVTTSILSTRWKDLWLSTPVLDID) folds into the F-box domain. 2 LRR repeats span residues 157–181 (LPNL…KFIS) and 294–317 (LSSL…LKHE). One can recognise an FBD domain in the interval 364-416 (EEISLSSSVPKCLQSSLENVEIIRPNYGSGEEMKLSKYFLENSLVLKKFKLCR).

The sequence is that of F-box/FBD/LRR-repeat protein At5g22660 from Arabidopsis thaliana (Mouse-ear cress).